We begin with the raw amino-acid sequence, 124 residues long: Fluoride-specific ion channel FluC (124 aa).

4 helical membrane passes run 5-25, 32-52, 67-87, and 96-116; these read VYIA…SGFV, SFPY…GLIM, FAIT…SFET, and LLIA…CTWI. 2 residues coordinate Na(+): G75 and T78.

Belongs to the fluoride channel Fluc/FEX (TC 1.A.43) family.

Its subcellular location is the cell inner membrane. It catalyses the reaction fluoride(in) = fluoride(out). With respect to regulation, na(+) is not transported, but it plays an essential structural role and its presence is essential for fluoride channel function. Its function is as follows. Fluoride-specific ion channel. Important for reducing fluoride concentration in the cell, thus reducing its toxicity. This is Fluoride-specific ion channel FluC from Citrifermentans bemidjiense (strain ATCC BAA-1014 / DSM 16622 / JCM 12645 / Bem) (Geobacter bemidjiensis).